Reading from the N-terminus, the 365-residue chain is Alanine racemase (365 aa).

The Proton acceptor; specific for D-alanine role is filled by lysine 32. Position 32 is an N6-(pyridoxal phosphate)lysine (lysine 32). Arginine 128 provides a ligand contact to substrate. The Proton acceptor; specific for L-alanine role is filled by tyrosine 257. A substrate-binding site is contributed by methionine 305.

It belongs to the alanine racemase family. Pyridoxal 5'-phosphate is required as a cofactor.

It carries out the reaction L-alanine = D-alanine. It functions in the pathway amino-acid biosynthesis; D-alanine biosynthesis; D-alanine from L-alanine: step 1/1. Catalyzes the interconversion of L-alanine and D-alanine. May also act on other amino acids. The sequence is that of Alanine racemase (alr) from Francisella tularensis subsp. tularensis (strain SCHU S4 / Schu 4).